A 186-amino-acid polypeptide reads, in one-letter code: CoB--CoM heterodisulfide reductase iron-sulfur subunit C 2 (186 aa).

4Fe-4S ferredoxin-type domains lie at 26 to 56 and 67 to 99; these read GEDIVKSIKACYQCGTCTGSCPSGRRTAYRT and LDDVLDSDDIWYCTTCYTCYERCPRDVKITEII. Cys36, Cys39, Cys42, Cys46, Cys79, Cys82, Cys85, and Cys89 together coordinate [4Fe-4S] cluster.

This sequence belongs to the HdrC family. The heterodisulfide reductase is composed of three subunits; HdrA, HdrB and HdrC. It depends on [4Fe-4S] cluster as a cofactor.

It participates in cofactor metabolism; coenzyme M-coenzyme B heterodisulfide reduction; coenzyme B and coenzyme M from coenzyme M-coenzyme B heterodisulfide: step 1/1. Part of a complex that catalyzes the reversible reduction of CoM-S-S-CoB to the thiol-coenzymes H-S-CoM (coenzyme M) and H-S-CoB (coenzyme B). The chain is CoB--CoM heterodisulfide reductase iron-sulfur subunit C 2 (hdrC2) from Methanocaldococcus jannaschii (strain ATCC 43067 / DSM 2661 / JAL-1 / JCM 10045 / NBRC 100440) (Methanococcus jannaschii).